Here is a 261-residue protein sequence, read N- to C-terminus: Beta cell expansion factor A (261 aa).

Residues 1 to 21 (MNKRNWLLALSLSLAFSPCYA) form the signal peptide. The SYLF domain stretch occupies residues 99 to 261 (KTAKEARIAI…IDKDLTETSR (163 aa)).

Its subcellular location is the secreted. It is found in the host. Functionally, stimulates the proliferation of insulin-producing beta cells during development in gnotobiotic zebrafish and mice. BefA is a microbiome-derived protein that traffics from the host intestinal lumen to the pancreas to act directly on pancreatic islets. In pancreas, interacts directly with host beta cells and elicits their proliferation via a mechanism of increasing membrane permeabilization. Can also permeabilize bacterial cell membranes, but does not show killing of target bacteria. This is Beta cell expansion factor A from Aeromonas veronii.